The chain runs to 227 residues: dTTP/UTP pyrophosphatase (227 aa).

Positions 1–21 (MNDLPRAELPGSGSPNPESLI) are disordered. The active-site Proton acceptor is the Asp87.

It belongs to the Maf family. YhdE subfamily. Requires a divalent metal cation as cofactor.

Its subcellular location is the cytoplasm. It catalyses the reaction dTTP + H2O = dTMP + diphosphate + H(+). The catalysed reaction is UTP + H2O = UMP + diphosphate + H(+). Its function is as follows. Nucleoside triphosphate pyrophosphatase that hydrolyzes dTTP and UTP. May have a dual role in cell division arrest and in preventing the incorporation of modified nucleotides into cellular nucleic acids. This chain is dTTP/UTP pyrophosphatase, found in Rhodopirellula baltica (strain DSM 10527 / NCIMB 13988 / SH1).